A 126-amino-acid chain; its full sequence is Fluoride-specific ion channel FluC (126 aa).

Helical transmembrane passes span 4-24 (SILAIAIGAAAGALLRWFLGL), 36-56 (GTLAANLVGGYIIGVAVALFA), 68-88 (LIITGFCGGLTTFSTFSAEVV), and 99-119 (AFAAIAVHVSGSLLMTMAGIA). Na(+)-binding residues include glycine 75 and threonine 78.

This sequence belongs to the fluoride channel Fluc/FEX (TC 1.A.43) family.

It is found in the cell inner membrane. It carries out the reaction fluoride(in) = fluoride(out). Its activity is regulated as follows. Na(+) is not transported, but it plays an essential structural role and its presence is essential for fluoride channel function. In terms of biological role, fluoride-specific ion channel. Important for reducing fluoride concentration in the cell, thus reducing its toxicity. This Chromobacterium violaceum (strain ATCC 12472 / DSM 30191 / JCM 1249 / CCUG 213 / NBRC 12614 / NCIMB 9131 / NCTC 9757 / MK) protein is Fluoride-specific ion channel FluC.